The primary structure comprises 140 residues: 6,7-dimethyl-8-ribityllumazine synthase (140 aa).

5-amino-6-(D-ribitylamino)uracil contacts are provided by residues Phe11, Ser43–Asp45, and Cys67–Ile69. Residue Asp72 to Thr73 coordinates (2S)-2-hydroxy-3-oxobutyl phosphate. His75 functions as the Proton donor in the catalytic mechanism. Leu100 contacts 5-amino-6-(D-ribitylamino)uracil. Position 115 (Arg115) interacts with (2S)-2-hydroxy-3-oxobutyl phosphate.

The protein belongs to the DMRL synthase family. As to quaternary structure, forms an icosahedral capsid composed of 60 subunits, arranged as a dodecamer of pentamers.

The enzyme catalyses (2S)-2-hydroxy-3-oxobutyl phosphate + 5-amino-6-(D-ribitylamino)uracil = 6,7-dimethyl-8-(1-D-ribityl)lumazine + phosphate + 2 H2O + H(+). It participates in cofactor biosynthesis; riboflavin biosynthesis; riboflavin from 2-hydroxy-3-oxobutyl phosphate and 5-amino-6-(D-ribitylamino)uracil: step 1/2. Catalyzes the formation of 6,7-dimethyl-8-ribityllumazine by condensation of 5-amino-6-(D-ribitylamino)uracil with 3,4-dihydroxy-2-butanone 4-phosphate. This is the penultimate step in the biosynthesis of riboflavin. The sequence is that of 6,7-dimethyl-8-ribityllumazine synthase from Methanococcus vannielii (strain ATCC 35089 / DSM 1224 / JCM 13029 / OCM 148 / SB).